The primary structure comprises 311 residues: Pyrimidine-specific ribonucleoside hydrolase RihA (311 aa).

Histidine 240 is a catalytic residue.

It belongs to the IUNH family. RihA subfamily.

Functionally, hydrolyzes cytidine or uridine to ribose and cytosine or uracil, respectively. The chain is Pyrimidine-specific ribonucleoside hydrolase RihA from Salmonella arizonae (strain ATCC BAA-731 / CDC346-86 / RSK2980).